The chain runs to 235 residues: Protein mxl-3 (235 aa).

A disordered region spans residues 18–49 (EKQFRKRHHSDSSDDDSSSPKSASPSMDDDRR). A basic motif region spans residues 47–60 (DRRAHHNELERRRR). The 52-residue stretch at 47-98 (DRRAHHNELERRRRDHIKDHFTILKDAIPLLDGEKSSRALILKRAVEFIHVM) folds into the bHLH domain. Positions 61–98 (DHIKDHFTILKDAIPLLDGEKSSRALILKRAVEFIHVM) are helix-loop-helix motif.

It belongs to the MAX family. As to quaternary structure, may form homodimer. Interacts (via N-terminus) with skn-1 isoforms a and c. Expressed in the intestine and in the AWC sensory neurons.

The protein localises to the nucleus. It is found in the cytoplasm. Transcription factor which regulates the expression of genes involved in lipid metabolism in response to nutrient availability. Binds to the E-box motif 5'-CACGTG-3'. Under well-fed conditions, binds to the promoter and represses the expression of lipase genes lipl-1, lipl-2, lipl-3 and to a lesser extent lipl-5, thereby preventing lipolysis. In response to a high-glucose diet, promotes fatty acid synthesis, elongation and desaturation by up-regulating transcription factor sbp-1 expression. Under well-fed conditions, acts remotely in the intestine to up-regulate the expression of chemoreceptor srh-234 gene in the ADL sensory neuron, possibly by regulating the insulin signaling pathway. This chain is Protein mxl-3, found in Caenorhabditis elegans.